The chain runs to 1040 residues: Multidrug resistance protein MdtB (1040 aa).

The next 12 helical transmembrane spans lie at 16–36 (FIMRPVATTLLMVAILLAGII), 347–367 (LMMAIALVVMIIYLFLRNIPA), 369–389 (IIPGVAVPLSLIGTFAVMVFL), 396–416 (LTLMALTIATGFVVDDAIVVI), 440–460 (IGFTIISLTFSLIAVLIPLLF), 472–492 (FAITLAVAILISAVVSLTLTP), 537–557 (WLTLSVALSTLLLSVLLWVFI), 863–883 (LGSTVWLIVAAVVAMYIVLGI), 888–908 (FIHPITILSTLPTAGVGALLA), 911–931 (IAGSELDVIAIIGIILLIGIV), 968–988 (ILMTTLAALLGALPLMLSTGV), and 998–1018 (IGMVGGLIVSQVLTLFTTPVI).

Belongs to the resistance-nodulation-cell division (RND) (TC 2.A.6) family. MdtB subfamily. Part of a tripartite efflux system composed of MdtA, MdtB and MdtC. MdtB forms a heteromultimer with MdtC.

Its subcellular location is the cell inner membrane. The polypeptide is Multidrug resistance protein MdtB (Shigella sonnei (strain Ss046)).